Reading from the N-terminus, the 1380-residue chain is Tripeptidyl-peptidase 2 (1380 aa).

The region spanning 110–619 (STFIASLMPK…QGLMQVDKAY (510 aa)) is the Peptidase S8 domain. Active-site charge relay system residues include aspartate 145, histidine 372, and serine 558. The interval 1099 to 1143 (DEKEGKNPKDNPVSYPISYVVPPNKPEEDKKAASAPTCSKSVSER) is disordered. A compositionally biased stretch (low complexity) spans 1110-1120 (PVSYPISYVVP). Coiled-coil stretches lie at residues 1152–1181 (KIKFLGNLKQETEEERSEWRKLCTCLKSEY) and 1238–1300 (EDDE…ELTK).

Belongs to the peptidase S8 family. As to quaternary structure, assembles into a large oligomeric complex containing two related proteins 153 and 142 kDa that are derived from the single TPP2 gene. The 142 kDa form mainly differs from the 153 kDa form by a truncation at the C-terminal end.

The enzyme catalyses Release of an N-terminal tripeptide from a polypeptide.. With respect to regulation, inhibited by alanine-alanine-phenylalanine-chloromethylketone, butabindide and phenylmethanesulfonyl fluoride (PMSF), but not by leupeptin, N-ethylmaleimide, EDTA, MG132 and lactacystin. Serine protease of the proteasome pathway that may function with the 20S proteasome to degrade oxidized proteins generated by environmental stress. In Arabidopsis thaliana (Mouse-ear cress), this protein is Tripeptidyl-peptidase 2 (TPP2).